Reading from the N-terminus, the 147-residue chain is Hemoglobin subunit epsilon (147 aa).

The Globin domain maps to 3–147 (HFTAEEKAAI…VAIALGHKYH (145 aa)). Residues serine 14 and serine 51 each carry the phosphoserine modification. Residues histidine 64 and histidine 93 each coordinate heme b.

This sequence belongs to the globin family. In terms of assembly, heterotetramer of two alpha chains and two epsilon chains in early embryonic hemoglobin Gower-2; two zeta chains and two epsilon chains in early embryonic hemoglobin Gower-1. Red blood cells.

The epsilon chain is a beta-type chain of early mammalian embryonic hemoglobin. The protein is Hemoglobin subunit epsilon (HBE1) of Lagothrix lagotricha (Brown woolly monkey).